The following is a 662-amino-acid chain: ATP-dependent zinc metalloprotease FtsH (662 aa).

Basic and acidic residues predominate over residues 1–15 (MSENPVKRPGKDGSR). The tract at residues 1–35 (MSENPVKRPGKDGSRNKFKPVQEEGGTPGWFRSKG) is disordered. At 1 to 39 (MSENPVKRPGKDGSRNKFKPVQEEGGTPGWFRSKGESPQ) the chain is on the cytoplasmic side. Residues 40-60 (GKFPGFLLFLMAGLLMLFVFL) form a helical membrane-spanning segment. The Periplasmic segment spans residues 61–154 (RFFSGTDAPE…LKVEKGSSDL (94 aa)). Residues 155-175 (NTFLALFAPWIIFAALYFFLF) form a helical membrane-spanning segment. Residues 176 to 662 (RRMSGQNGAQ…QGALPNPVTA (487 aa)) lie on the Cytoplasmic side of the membrane. 250 to 257 (GPPGTGKT) contacts ATP. Residue histidine 472 coordinates Zn(2+). The active site involves glutamate 473. Histidine 476 and aspartate 548 together coordinate Zn(2+).

The protein in the central section; belongs to the AAA ATPase family. It in the C-terminal section; belongs to the peptidase M41 family. As to quaternary structure, homohexamer. Zn(2+) serves as cofactor.

It is found in the cell inner membrane. Acts as a processive, ATP-dependent zinc metallopeptidase for both cytoplasmic and membrane proteins. Plays a role in the quality control of integral membrane proteins. The protein is ATP-dependent zinc metalloprotease FtsH of Pelodictyon phaeoclathratiforme (strain DSM 5477 / BU-1).